The following is an 88-amino-acid chain: Exodeoxyribonuclease 7 small subunit (88 aa).

Belongs to the XseB family. In terms of assembly, heterooligomer composed of large and small subunits.

It localises to the cytoplasm. The enzyme catalyses Exonucleolytic cleavage in either 5'- to 3'- or 3'- to 5'-direction to yield nucleoside 5'-phosphates.. Bidirectionally degrades single-stranded DNA into large acid-insoluble oligonucleotides, which are then degraded further into small acid-soluble oligonucleotides. The protein is Exodeoxyribonuclease 7 small subunit of Bordetella bronchiseptica (strain ATCC BAA-588 / NCTC 13252 / RB50) (Alcaligenes bronchisepticus).